The following is a 1157-amino-acid chain: MSLFGVGFLASAKGKRVCAIGRSSLGKISDPLEVPNLLDLQLDSFDWLIGGPRWRVALDAYRKNPSGAPIAEKSGLDEVFDEISPIEDSAGNMQLNFSKPVLEAEELSVRECRVRGRTYSAPLYVEAEFMNHDTGEIKTQTVFMGDFPLMTDKGTFVINGTERVVVSQLVRSPGVYFERTPEKNSEKDLFSGRIIPARGAWLEFEVDRHDQLGVRVDRKRRQPVIFFLRAIGMTDDEIRDAFGEFESISVQHEKNIGLSRDDALREIYRRVRPGEQASAEAGRALLENFYFTSRRFDLARVGRYKVNRKLGVDVDPTRMVLTRSDIIATIRYLAALHLGFSEVAVLNSNKSVPISTDDIDHLGNRRIRPVGELVQNQLRAGLARMERVVRERMTTQDIEAIIPQTLINVMPIVAALKEFYGTSQLSQFMDQNNPLAGLTHKRRLSALGPGGLSRERAGVEVRDVNPSHYGRMCPIETPEGPNIGLIGSLACYSRVNSFGFIETPYRRVVNGKVTDDIEYMTATQEDEHAIAQASTPLRPDNSFVDERVLVRRKGGEVEVVPADQVDYMDVSGRQMVSVATSLIPFLEHNDANRALMGSNMQRQAVPLLVTESPLVGTGMERYVAIDAGDVLIAEDPGIVGDVSADVVTVKQDDGKHRDYHVGKFVRSNQGNCYNQRVVVRSGDRVEKGTVLADGPCTDKGELSLGRNLLVAFMPWEGYNFEDAIIISQNLVKDDTLSSIHIEEHEVSTRDTKLGSEEITRDLPNVSMDYIKDLDERGIIRIGAEVGPGDILVGKVTPKGETELSAEERLLRAIFNEKSMEVRDTSLKVPHGQQGTVIDVKLFDAVDGEDKLGAGINQRVVVYIAHKRKITEGDKLAGRHGNKGVISKILPVEDMPFMADGTPVDIILNPLGVPARMNFGQVLETHLGWISKQGWKIEGDPDWAKDIRVREAQPDSRVSSPVFDGISEGEITGLFSSVFPNRDGERAVGSDGKAILYDGRTGEPFPEPISVGYMYVLKLHHLVDDKIHARSTGPYSMITQQPLGGKAQFGGQRFGEMEVWALEAYGAAHALQELLTIKSDDVVGRVKVYDAIVKGYPIPTPGVPESFKVIVKEMQSLCINIEVVSDGEDDVSADAETLQIEEGLDTSPKVEVGSLEEV.

This sequence belongs to the RNA polymerase beta chain family. In terms of assembly, the RNAP catalytic core consists of 2 alpha, 1 beta, 1 beta' and 1 omega subunit. When a sigma factor is associated with the core the holoenzyme is formed, which can initiate transcription.

It catalyses the reaction RNA(n) + a ribonucleoside 5'-triphosphate = RNA(n+1) + diphosphate. Functionally, DNA-dependent RNA polymerase catalyzes the transcription of DNA into RNA using the four ribonucleoside triphosphates as substrates. The sequence is that of DNA-directed RNA polymerase subunit beta from Tropheryma whipplei (strain Twist) (Whipple's bacillus).